The primary structure comprises 399 residues: MAEEEENQELYIAENEVEEVIKDNDKLMDQGVTEDEAEQEQNDTMNNMVMDMSVQGFFEHKDSVFSVSINPVHSNLCASGGGDDLGYIWDITTGEQICQLTGHKDSIVAIDWSFDGTYIATGGMDSQVRLWKSSTGFEFITAFETVDEIVWLSWHPKGLFLAAGCNDGSIWMWSLPSGKVVQVMYGHTAPVNAGKFIPPGVGKRLATVDDSGTLIVWNPATGAPECRMSSDDHRFDPGNEETAAGWTSFDCNAEGNVLFLGGSSGKVKVVNINSSHILASLEAQTESVEAIALCTALPICACASVDGTVALYDSASLKFRKSLPHEQAVIDCKFLPNTPYLLTACADCVIRKWDVRSGQLLGEYTGHQEPILCMAITPDGKRVVTGSDDTELLVFDCEH.

WD repeat units follow at residues 59 to 99, 102 to 141, 144 to 185, 187 to 227, 241 to 280, 283 to 322, 324 to 363, and 366 to 399; these read EHKD…QICQ, GHKD…EFIT, ETVD…QVMY, HTAP…PECR, ETAA…ILAS, AQTE…FRKS, PHEQ…LLGE, and GHQE…DCEH.

The protein localises to the cytoplasm. Its subcellular location is the nucleus. This is an uncharacterized protein from Schizosaccharomyces pombe (strain 972 / ATCC 24843) (Fission yeast).